A 459-amino-acid chain; its full sequence is MGKEKSHINVVVIGHVDSGKSTTTGHLIYKCGGIDKRTIEKFEKEAAELGKGSFKYAWVLDKLKSERERGITIDIALWKFETPKYMVTVIDAPGHRDFIKNMITGTSQADCAILIIAAGTGEFEAGISKDGQTREHALLAYTLGVKQLIVAINKMDTTKWSEARYQEIIKETSGFIKKVGYNPKHVPFVPISGFNGDNMIEVSSNCPWYKGWEKETKAKATGKTLLEAIDAIDPPSRPTDKPLRLPLQDVYKIGGIGTVPVGRVETGTIKGGMVVTFAPAGVTTEVKSVEMHHEQLSEGLPGDNVGFNVKNVSVKEIRRGNVAGDSKNDPPKGCDSFNAQVIVLNHPGQVGAGYAPVLDCHTAHIACKFSELVEKIDRRTGKSVEAAPKFIKSGDAAIVKMVPSKPMCVEAFTDYPPLGRFAVRDMRQTVAVGVIKSVAKSDKQGAGKVTKAAVKAGKK.

Glycine 2 carries the post-translational modification N,N,N-trimethylglycine. Position 3 is an N6,N6-dimethyllysine; alternate (lysine 3). Residue lysine 3 is modified to N6-methyllysine; alternate. The tr-type G domain maps to 5–239 (KSHINVVVIG…DAIDPPSRPT (235 aa)). The interval 14 to 21 (GHVDSGKS) is G1. 14-21 (GHVDSGKS) contributes to the GTP binding site. Lysine 30 carries the post-translational modification N6-methyllysine. The tract at residues 70-74 (GITID) is G2. The residue at position 79 (lysine 79) is an N6,N6,N6-trimethyllysine. Positions 91–94 (DAPG) are G3. GTP-binding positions include 91–95 (DAPGH) and 153–156 (NKMD). Residues 153-156 (NKMD) form a G4 region. The G5 stretch occupies residues 192-194 (SGF). Residue lysine 315 is modified to N6,N6-dimethyllysine; alternate. An N6-methyllysine; alternate modification is found at lysine 315. The residue at position 389 (lysine 389) is an N6-methyllysine.

This sequence belongs to the TRAFAC class translation factor GTPase superfamily. Classic translation factor GTPase family. EF-Tu/EF-1A subfamily.

The protein resides in the cytoplasm. Its function is as follows. This protein promotes the GTP-dependent binding of aminoacyl-tRNA to the A-site of ribosomes during protein biosynthesis. The chain is Elongation factor 1-alpha (TEF1) from Aureobasidium pullulans (Black yeast).